The chain runs to 416 residues: Type II methyltransferase M.PspPI (416 aa).

Positions Tyr77–Ala410 constitute an SAM-dependent MTase C5-type domain. Cys149 is an active-site residue.

Belongs to the class I-like SAM-binding methyltransferase superfamily. C5-methyltransferase family.

It carries out the reaction a 2'-deoxycytidine in DNA + S-adenosyl-L-methionine = a 5-methyl-2'-deoxycytidine in DNA + S-adenosyl-L-homocysteine + H(+). Its function is as follows. A methylase, recognizes the double-stranded sequence 5'-GGNCC-3', methylates C-4 on both strands, and protects the DNA from cleavage by the PspPI endonuclease. This chain is Type II methyltransferase M.PspPI, found in Psychrobacter sp. (strain TA137).